A 339-amino-acid polypeptide reads, in one-letter code: UPF0324 membrane protein spyM18_1033 (339 aa).

The next 9 membrane-spanning stretches (helical) occupy residues 7–24 (KLPG…AWYL), 28–50 (FPII…FYGH), 57–79 (GISF…GLNL), 84–106 (AVGM…VAYG), 118–140 (ATLV…APVI), 150–172 (AISV…GQLL), 256–275 (FILF…SFGV), 290–307 (FIVM…LVKL), and 314–336 (AILL…QLSL).

This sequence belongs to the UPF0324 family.

It is found in the cell membrane. This chain is UPF0324 membrane protein spyM18_1033, found in Streptococcus pyogenes serotype M18 (strain MGAS8232).